The following is a 247-amino-acid chain: ATP synthase subunit a, chloroplastic (247 aa).

5 consecutive transmembrane segments (helical) span residues 38–58 (QVLI…IIAV), 95–115 (VPFI…GALL), 134–154 (INTT…AGLT), 199–219 (LVVV…VMFL), and 220–240 (GLFT…AYIG).

Belongs to the ATPase A chain family. In terms of assembly, F-type ATPases have 2 components, CF(1) - the catalytic core - and CF(0) - the membrane proton channel. CF(1) has five subunits: alpha(3), beta(3), gamma(1), delta(1), epsilon(1). CF(0) has four main subunits: a, b, b' and c.

It localises to the plastid. It is found in the chloroplast thylakoid membrane. In terms of biological role, key component of the proton channel; it plays a direct role in the translocation of protons across the membrane. The sequence is that of ATP synthase subunit a, chloroplastic from Morus indica (Mulberry).